Here is a 285-residue protein sequence, read N- to C-terminus: CCR4-NOT transcription complex subunit 7 (285 aa).

A divalent metal cation is bound by residues D40, E42, D161, D230, and E278.

It belongs to the CAF1 family. As to quaternary structure, component of the CCR4-NOT complex. The cofactor is Mn(2+). Requires Mg(2+) as cofactor. It depends on Co(2+) as a cofactor.

The protein localises to the nucleus. The protein resides in the cytoplasm. It catalyses the reaction Exonucleolytic cleavage of poly(A) to 5'-AMP.. Has 3'-5' poly(A) exoribonuclease activity for synthetic poly(A) RNA substrate. Catalytic component of the CCR4-NOT complex which is one of the major cellular mRNA deadenylases and is linked to various cellular processes including bulk mRNA degradation, miRNA-mediated repression, translational repression during translational initiation and general transcription regulation. During miRNA-mediated repression the complex also seems to act as translational repressor during translational initiation. Additional complex functions may be a consequence of its influence on mRNA expression. The chain is CCR4-NOT transcription complex subunit 7 (cnot7) from Xenopus tropicalis (Western clawed frog).